The sequence spans 348 residues: GTP 3',8-cyclase (348 aa).

The region spanning 24 to 242 (PFGRAVTYLR…EKQFTLTDID (219 aa)) is the Radical SAM core domain. R33 provides a ligand contact to GTP. 2 residues coordinate [4Fe-4S] cluster: C40 and C44. Y46 contacts S-adenosyl-L-methionine. A [4Fe-4S] cluster-binding site is contributed by C47. R82 contributes to the GTP binding site. Position 86 (G86) interacts with S-adenosyl-L-methionine. T115 lines the GTP pocket. Residue S139 participates in S-adenosyl-L-methionine binding. K175 is a binding site for GTP. M209 serves as a coordination point for S-adenosyl-L-methionine. C272 and C275 together coordinate [4Fe-4S] cluster. 277–279 (RVR) is a binding site for GTP. Position 289 (C289) interacts with [4Fe-4S] cluster.

This sequence belongs to the radical SAM superfamily. MoaA family. Monomer and homodimer. Requires [4Fe-4S] cluster as cofactor.

The catalysed reaction is GTP + AH2 + S-adenosyl-L-methionine = (8S)-3',8-cyclo-7,8-dihydroguanosine 5'-triphosphate + 5'-deoxyadenosine + L-methionine + A + H(+). It participates in cofactor biosynthesis; molybdopterin biosynthesis. Its function is as follows. Catalyzes the cyclization of GTP to (8S)-3',8-cyclo-7,8-dihydroguanosine 5'-triphosphate. The chain is GTP 3',8-cyclase from Rhizobium etli (strain CIAT 652).